Here is a 56-residue protein sequence, read N- to C-terminus: Zinc finger mu-protein HVO_0758 (56 aa).

4 residues coordinate Zn(2+): Cys-23, Cys-26, Cys-45, and Cys-48. 2 consecutive short sequence motifs (c(P)XCG motif) follow at residues 23–27 (CSECG) and 45–49 (CADCG).

Monomer.

Its function is as follows. Zinc-binding protein that binds one zinc ion. Is involved in biofilm formation, swarming and glycerol metabolism regulation. The chain is Zinc finger mu-protein HVO_0758 from Haloferax volcanii (strain ATCC 29605 / DSM 3757 / JCM 8879 / NBRC 14742 / NCIMB 2012 / VKM B-1768 / DS2) (Halobacterium volcanii).